We begin with the raw amino-acid sequence, 859 residues long: ATP-dependent DNA helicase PIF1 (859 aa).

The transit peptide at 1 to 45 (MPKWIRSTLNHIIPRRPFICSFNSFLLLKNVSHAKLSFSMSSRGF) directs the protein to the mitochondrion. Residues Ser70 and Ser72 each carry the phosphoserine modification. Polar residues predominate over residues 142–157 (NSFDQSSQKKSRSTGF). Residues 142 to 183 (NSFDQSSQKKSRSTGFKNPLRPALKKESSFDELQNSSISQER) form a disordered region. A Phosphoserine modification is found at Ser169. A compositionally biased stretch (polar residues) spans 172-182 (DELQNSSISQE). ATP is bound at residue 258–265 (GSAGTGKS). Phosphoserine is present on Ser584. Residues 727-746 (QAYVALSRAVSREGLQVLNF) mediate DNA binding. The segment at 782-859 (KRKLDYAPGP…GQDTEDHILE (78 aa)) is disordered. Residues 800–809 (KSNSPAPISA) are compositionally biased toward low complexity. The span at 844–859 (VSDEPRGQDTEDHILE) shows a compositional bias: basic and acidic residues.

The protein belongs to the helicase family. PIF1 subfamily. In terms of assembly, monomer in solution. DNA binding induces dimerization. Associates with mitochondrial and telomeric DNA. Binding to mtDNA is non-specific and the protein seems to coat the entire mtDNA molecule. Binds to the telomerase RNA TLC1. Interacts with the mitochondrial single-strand DNA-binding protein RIM1. Mg(2+) serves as cofactor. The cofactor is Mn(2+). In terms of processing, phosphorylated. Undergoes RAD53-dependent phosphorylation in response to loss of mtDNA.

The protein localises to the nucleus. It is found in the nucleolus. The protein resides in the mitochondrion inner membrane. The enzyme catalyses Couples ATP hydrolysis with the unwinding of duplex DNA at the replication fork by translocating in the 5'-3' direction. This creates two antiparallel DNA single strands (ssDNA). The leading ssDNA polymer is the template for DNA polymerase III holoenzyme which synthesizes a continuous strand.. It catalyses the reaction ATP + H2O = ADP + phosphate + H(+). Functionally, DNA-dependent ATPase and 5'-3' DNA helicase required for the maintenance of both mitochondrial and nuclear genome stability. Efficiently unwinds G-quadruplex (G4) DNA structures and forked RNA-DNA hybrids. Appears to move along DNA in single nucleotide or base pair steps, powered by hydrolysis of 1 molecule of ATP. Processes at an unwinding rate of about 75 bp/s. Resolves G4 structures, preventing replication pausing and double-strand breaks (DSBs) at G4 motifs. Involved in the maintenance of telomeric DNA. Inhibits telomere elongation, de novo telomere formation and telomere addition to DSBs via catalytic inhibition of telomerase. Reduces the processivity of telomerase by displacing active telomerase from DNA ends. Releases telomerase by unwinding the short telomerase RNA/telomeric DNA hybrid that is the intermediate in the telomerase reaction. Involved in the maintenance of ribosomal (rDNA). Required for efficient fork arrest at the replication fork barrier within rDNA. Involved in the maintenance of mitochondrial (mtDNA). Required to maintain mtDNA under conditions that introduce dsDNA breaks in mtDNA, either preventing or repairing dsDNA breaks. May inhibit replication progression to allow time for repair. May have a general role in chromosomal replication by affecting Okazaki fragment maturation. May have a role in conjunction with DNA2 helicase/nuclease in 5'-flap extension during Okazaki fragment processing. The sequence is that of ATP-dependent DNA helicase PIF1 from Saccharomyces cerevisiae (strain YJM789) (Baker's yeast).